Here is a 325-residue protein sequence, read N- to C-terminus: Secreted RxLR effector protein RXLR-C07 (325 aa).

The signal sequence occupies residues 1 to 19 (MQGVRITILWCIVLATIYA). 5 TPR repeats span residues 37-75 (RGLRNAGMKANDERMFKDAIEKLRHAISLLHNRVFGEER), 92-125 (AQILNDYGSVLIRTKQYDEAIEVLEDSVAMIEKI), 134-167 (GLSLRSLADAYMEKKAFKSAIKRYKTLRKHVKKG), 218-251 (AELYMELSSAHVEVGEIDDALRAAETASAIFLQR), and 260-293 (AFSLNALAGVKMQQKKVDEAIDLLDRAHNIAVSI). The short motif at 37-75 (RGLRNAGMKANDERMFKDAIEKLRHAISLLHNRVFGEER) is the RxLR-dEER element.

The protein belongs to the RxLR effector family.

It localises to the secreted. It is found in the host cytoplasm. The protein localises to the host nucleus. Its subcellular location is the host nucleolus. Functionally, secreted effector that suppresses pattern-triggered immunity (PTI) in plant host. The protein is Secreted RxLR effector protein RXLR-C07 of Plasmopara halstedii (Downy mildew of sunflower).